The primary structure comprises 215 residues: Putative serine/threonine-protein kinase YrzF (215 aa).

Residues 27–215 (SEELTLIGKG…HFAQRKRKYS (189 aa)) enclose the Protein kinase domain. Residues 33 to 41 (IGKGRSAYV) and Lys-54 contribute to the ATP site. Asp-135 acts as the Proton acceptor in catalysis.

It belongs to the protein kinase superfamily. Ser/Thr protein kinase family.

The enzyme catalyses L-seryl-[protein] + ATP = O-phospho-L-seryl-[protein] + ADP + H(+). It carries out the reaction L-threonyl-[protein] + ATP = O-phospho-L-threonyl-[protein] + ADP + H(+). The sequence is that of Putative serine/threonine-protein kinase YrzF (yrzF) from Bacillus subtilis (strain 168).